Consider the following 972-residue polypeptide: Translation initiation factor IF-2 (972 aa).

Positions 49 to 63 (HLRKSHGATDGDKRK) are enriched in basic and acidic residues. 2 disordered regions span residues 49–86 (HLRKSHGATDGDKRKITLTRKHTSEIKQSDATGKARTI) and 100–383 (DDVA…TFQA). The segment covering 105–114 (GAEQGQAQVA) has biased composition (low complexity). Over residues 121–177 (ELKRREEEARREAELLEKQAQELRERQERLEREEAERRAREEAAEAERRRAEEEAAA) the composition is skewed to basic and acidic residues. Over residues 178 to 209 (KRAAAAAVEAQQAAAQQAAEAQQETAGAQSAQ) the composition is skewed to low complexity. Positions 210–261 (DEARAAAERAAQREAAKKAEDAAREAADKTRAEQEEIRKRREAAEAEARAIR) are enriched in basic and acidic residues. A compositionally biased stretch (pro residues) spans 277-286 (PPKPVEPPKP). Positions 298-327 (KPAGAGAARPAVKKPAGAAPATTQAPAGAG) are enriched in low complexity. Gly residues predominate over residues 356-369 (SSGGVDRGWRGGPK). Residues 472–641 (PRPPVVTVMG…LLQAEVLELK (170 aa)) form the tr-type G domain. The segment at 481–488 (GHVDHGKT) is G1. GTP is bound at residue 481 to 488 (GHVDHGKT). The G2 stretch occupies residues 506 to 510 (GITQH). Residues 527 to 530 (DTPG) are G3. Residues 527–531 (DTPGH) and 581–584 (NKID) contribute to the GTP site. Positions 581–584 (NKID) are G4. The G5 stretch occupies residues 617–619 (SAK).

It belongs to the TRAFAC class translation factor GTPase superfamily. Classic translation factor GTPase family. IF-2 subfamily.

Its subcellular location is the cytoplasm. Functionally, one of the essential components for the initiation of protein synthesis. Protects formylmethionyl-tRNA from spontaneous hydrolysis and promotes its binding to the 30S ribosomal subunits. Also involved in the hydrolysis of GTP during the formation of the 70S ribosomal complex. The protein is Translation initiation factor IF-2 of Burkholderia ambifaria (strain MC40-6).